A 285-amino-acid chain; its full sequence is MIFMKDNIVTVEHLSFTYKDSEEPAVKDVSFSIPKGTWTTLVGHNGSGKSTIARLLNGILLPDDNPETLINIDGITLTEKTMWDIRDRVGIVFQNPDNQFVGATVEDDVAFGLENRQVPRPKMKSIVQDVLNQVGMTNFQKSEPQYLSGGQKQRVAIAGILAIGPKLIILDESTSMLDPAGKFKILKLIRKLQKENELTIFSITHDINEAEHADQILVLDKGSLLASDSPVDIFKDVSLIKNAGLDLPLFYKIKNKLINKGISIPQEVNTEEKLVKYLCQLNSKM.

Positions 9–246 constitute an ABC transporter domain; sequence VTVEHLSFTY…VSLIKNAGLD (238 aa). 43–50 contributes to the ATP binding site; that stretch reads GHNGSGKS.

This sequence belongs to the ABC transporter superfamily. Energy-coupling factor EcfA family. In terms of assembly, forms a stable energy-coupling factor (ECF) transporter complex composed of 2 membrane-embedded substrate-binding proteins (S component), 2 ATP-binding proteins (A component) and 2 transmembrane proteins (T component).

It localises to the cell membrane. Functionally, ATP-binding (A) component of a common energy-coupling factor (ECF) ABC-transporter complex. Unlike classic ABC transporters this ECF transporter provides the energy necessary to transport a number of different substrates. This chain is Energy-coupling factor transporter ATP-binding protein EcfA1, found in Lactobacillus gasseri (strain ATCC 33323 / DSM 20243 / BCRC 14619 / CIP 102991 / JCM 1131 / KCTC 3163 / NCIMB 11718 / NCTC 13722 / AM63).